The sequence spans 225 residues: MASRDSSAASEITPDVLLRAYACGIFPMAESVDDPSLFWVEPDMRGIIPLGGFRVSSRLARTVRSDAFTVTVNRDFKAVIDGCAAPQPGRDDTWINRRIRELYIGLHDIGHCHSVEVWQDGDLAGGLYGVSLGRAFFGESMFHRARDASKVALVHLVARLLAGGYTLLDTQFVTDHLKSFGAIEVPRLRYRSLLDDSLEGEASFAALPLDRPVTGTEALAIITRT.

It belongs to the L/F-transferase family.

The protein localises to the cytoplasm. The enzyme catalyses N-terminal L-lysyl-[protein] + L-leucyl-tRNA(Leu) = N-terminal L-leucyl-L-lysyl-[protein] + tRNA(Leu) + H(+). It catalyses the reaction N-terminal L-arginyl-[protein] + L-leucyl-tRNA(Leu) = N-terminal L-leucyl-L-arginyl-[protein] + tRNA(Leu) + H(+). The catalysed reaction is L-phenylalanyl-tRNA(Phe) + an N-terminal L-alpha-aminoacyl-[protein] = an N-terminal L-phenylalanyl-L-alpha-aminoacyl-[protein] + tRNA(Phe). Functionally, functions in the N-end rule pathway of protein degradation where it conjugates Leu, Phe and, less efficiently, Met from aminoacyl-tRNAs to the N-termini of proteins containing an N-terminal arginine or lysine. This is Leucyl/phenylalanyl-tRNA--protein transferase from Rhodopseudomonas palustris (strain TIE-1).